A 698-amino-acid polypeptide reads, in one-letter code: MHPSEMQRKAPPRRRRHRNRAPLTHKMNKMVTSEQMKLPSTKKAEPPTWAQLKKLTQLATKYLENTKVTQTPESMLLAALMIVSMVVSLPMPAGAAAANYTNWAYVPFPPLIRAVTWMDNPIEVYVNDSVWVHGPIDDRCPAKPEEEGMMINISIGYHYPPICLGRAPGCLMPAVQNWLVEVPTVSPISRFTYNMVSGMSLRPRVNYLQDFSYQRSLKFRPKGKPCPKEIPKESKNTEVLVWEECVANSVVILQNNEFGTIIDWAPRGQFYHNCSGQTQSCPSAQVSPAVDSDLTESLDKHKHKKLQSFYPWEWGEKGISTPRPKIISPVSGPEHPELWRLTVASHHIRIWSGNQTLETRDRKPFYTVDLNSSLTVPLQSCVKPPYMLVVGNIVIKPDSQTITCENCRLLTCIDSTFNWQHRILLVRAREGVWIPVSMDRPWEASPSIHILTEVLKGVLNRSKRFIFTLIAVIMGLIAVTAMAAVAGVALHSFVQSVNFVNDWQKNSTRLWNSQSSIDQKLANQINDLRQTVIWMGDRLMSLEHRFQLQCDWNTSDFCITPQIYNESEHHWDMVRRHLQGREDNLTLDISKLKEQIFEASKAHLNLVPGTEAIAGVADGLANLNPVTWVKTIGSTTIINLILILVCLFCLLLVCRCTQQLRRDSDHRERAMMTMVVLSKRKGGNVGKSKRDQIVTVSV.

The segment at 1 to 25 (MHPSEMQRKAPPRRRRHRNRAPLTH) is disordered. The signal sequence occupies residues 1 to 88 (MHPSEMQRKA…ALMIVSMVVS (88 aa)). The span at 10–20 (APPRRRRHRNR) shows a compositional bias: basic residues. At 89–631 (LPMPAGAAAA…NLNPVTWVKT (543 aa)) the chain is on the extracellular side. N99, N127, N152, N273, N354, N371, and N460 each carry an N-linked (GlcNAc...) asparagine glycan. The fusion peptide stretch occupies residues 465 to 485 (FIFTLIAVIMGLIAVTAMAAV). N506, N553, N565, and N584 each carry an N-linked (GlcNAc...) asparagine glycan. A helical transmembrane segment spans residues 632 to 652 (IGSTTIINLILILVCLFCLLL). Over 653–698 (VCRCTQQLRRDSDHRERAMMTMVVLSKRKGGNVGKSKRDQIVTVSV) the chain is Cytoplasmic.

It belongs to the beta type-B retroviral envelope protein family. HERV class-II K(HML-2) env subfamily. The surface (SU) and transmembrane (TM) proteins form a heterodimer. SU and TM are attached by noncovalent interactions or by a labile interchain disulfide bond. Post-translationally, specific enzymatic cleavages in vivo yield the mature SU and TM proteins.

Its subcellular location is the cell membrane. It is found in the virion. Functionally, retroviral envelope proteins mediate receptor recognition and membrane fusion during early infection. Endogenous envelope proteins may have kept, lost or modified their original function during evolution. This endogenous envelope protein has lost its original fusogenic properties. SU mediates receptor recognition. Its function is as follows. TM anchors the envelope heterodimer to the viral membrane through one transmembrane domain. The other hydrophobic domain, called fusion peptide, mediates fusion of the viral membrane with the target cell membrane. This Homo sapiens (Human) protein is Endogenous retrovirus group K member 21 Env polyprotein (ERVK-21).